Reading from the N-terminus, the 457-residue chain is MSLLPPEQRQLLHRCILNYIRSQVPGDGAEGETGGQTEERHVMNSLAKWLRVDPDGLDGEKAADGSLLPRKWSSIVRLQRRIIELEKEIQELTDENENLRENGPSSPANGALKSWLPRERPSFSISAGASVTSVKLHPELPLVFIATDAGKLQCYDLMNYTMPVASVQAHMRGITAIDAYVGEDSQCLVATASKDLHCKVFRFVDSELQLIRTLSGHEHIVSHIKIWNNSTNTLVASCSRDLTCKVWDIANGWCLKSFQPHTEWVRCLDVMGDFVVTGSNDCTVRLSHWPTGRSLSFGTGHEFPVEKIRIIPLQPPESAEHSHRFNTHDEDYLPLGFSHVISTSRDGTLRIWQVPLPRFVAHRAPQPNPARPYFNLVATLKGHSSWVRDVRVRGKHAFSCSDDRSIKVWDLSTCEVVRSINNLHSGFINCIDIDCGGLNRQLLVSGGADGKLVILMK.

The stretch at 73–106 forms a coiled coil; it reads SSIVRLQRRIIELEKEIQELTDENENLRENGPSS. 7 WD repeats span residues 126–165, 169–211, 216–257, 260–299, 322–362, 382–419, and 423–457; these read SAGA…MPVA, AHMR…LQLI, GHEH…CLKS, PHTE…SFGT, SHRF…FVAH, GHSS…VVRS, and LHSG…ILMK.

It belongs to the WD repeat LIS1/nudF family. In terms of assembly, self-associates. Interacts with NDL1 and dynein.

Its subcellular location is the cytoplasm. The protein localises to the cytoskeleton. The protein resides in the spindle pole. Positively regulates the activity of the minus-end directed microtubule motor protein dynein. Plays a central role in positioning the mitotic spindle at the bud neck during cell division. Targets cytoplasmic dynein to microtubule plus ends, thereby promoting dynein-mediated microtubule sliding along the bud cortex and consequently the movement of the mitotic spindle to the bud neck. The polypeptide is Nuclear distribution protein PAC1 (Lachancea thermotolerans (strain ATCC 56472 / CBS 6340 / NRRL Y-8284) (Yeast)).